Consider the following 81-residue polypeptide: ATP synthase subunit c (81 aa).

2 consecutive transmembrane segments (helical) span residues tyrosine 14–valine 34 and leucine 60–valine 80.

This sequence belongs to the ATPase C chain family. F-type ATPases have 2 components, F(1) - the catalytic core - and F(0) - the membrane proton channel. F(1) has five subunits: alpha(3), beta(3), gamma(1), delta(1), epsilon(1). F(0) has three main subunits: a(1), b(2) and c(10-14). The alpha and beta chains form an alternating ring which encloses part of the gamma chain. F(1) is attached to F(0) by a central stalk formed by the gamma and epsilon chains, while a peripheral stalk is formed by the delta and b chains.

Its subcellular location is the cell membrane. In terms of biological role, f(1)F(0) ATP synthase produces ATP from ADP in the presence of a proton or sodium gradient. F-type ATPases consist of two structural domains, F(1) containing the extramembraneous catalytic core and F(0) containing the membrane proton channel, linked together by a central stalk and a peripheral stalk. During catalysis, ATP synthesis in the catalytic domain of F(1) is coupled via a rotary mechanism of the central stalk subunits to proton translocation. Its function is as follows. Key component of the F(0) channel; it plays a direct role in translocation across the membrane. A homomeric c-ring of between 10-14 subunits forms the central stalk rotor element with the F(1) delta and epsilon subunits. The polypeptide is ATP synthase subunit c (Clostridium acetobutylicum (strain ATCC 824 / DSM 792 / JCM 1419 / IAM 19013 / LMG 5710 / NBRC 13948 / NRRL B-527 / VKM B-1787 / 2291 / W)).